A 381-amino-acid polypeptide reads, in one-letter code: Lysophosphatidylserine lipase ABHD12 (381 aa).

The Cytoplasmic segment spans residues 1-58 (MRKRNESVTVEHERAAAAPAPLDKGCSLRHSLRLPAADTGMKRPLGRRHGLWFRLRRL). Residues 59 to 79 (IIWLLGVYIAIPFLVKLCPAI) form a helical membrane-spanning segment. Residues 80–381 (QAKLVFLNFV…LGIPEHEHHH (302 aa)) are Extracellular-facing. An N-linked (GlcNAc...) asparagine glycan is attached at Asn-106. Catalysis depends on Ser-229, which acts as the Nucleophile. Active-site charge relay system residues include Asp-316 and His-355.

It belongs to the serine esterase family.

Its subcellular location is the endoplasmic reticulum membrane. It carries out the reaction 1-(9Z-octadecenoyl)-sn-glycero-3-phospho-L-serine + H2O = sn-glycero-3-phospho-L-serine + (9Z)-octadecenoate + H(+). It catalyses the reaction 1-(9Z-octadecenoyl)-sn-glycero-3-phospho-(1'-sn-glycerol) + H2O = sn-glycero-3-phospho-(1'-sn-glycerol) + (9Z)-octadecenoate + H(+). The enzyme catalyses 1-(9Z-octadecenoyl)-sn-glycero-3-phospho-(1D-myo-inositol) + H2O = sn-glycero-3-phospho-1D-myo-inositol + (9Z)-octadecenoate + H(+). The catalysed reaction is 1-(9Z-octadecenoyl)-sn-glycero-3-phosphoethanolamine + H2O = sn-glycero-3-phosphoethanolamine + (9Z)-octadecenoate + H(+). It carries out the reaction 1-(9Z-octadecenoyl)-sn-glycero-3-phosphocholine + H2O = 1-(9Z-octadecenoyl)-sn-glycerol + phosphocholine + H(+). It catalyses the reaction 2-(9Z-octadecenoyl)-glycerol + H2O = glycerol + (9Z)-octadecenoate + H(+). The enzyme catalyses 1-hexadecanoyl-sn-glycero-3-phospho-L-serine + H2O = sn-glycero-3-phospho-L-serine + hexadecanoate + H(+). The catalysed reaction is 2-(5Z,8Z,11Z,14Z-eicosatetraenoyl)-glycerol + H2O = glycerol + (5Z,8Z,11Z,14Z)-eicosatetraenoate + H(+). It carries out the reaction Hydrolyzes glycerol monoesters of long-chain fatty acids.. It catalyses the reaction 1-decanoylglycerol + H2O = decanoate + glycerol + H(+). The enzyme catalyses 1-dodecanoylglycerol + H2O = dodecanoate + glycerol + H(+). The catalysed reaction is 1-tetradecanoylglycerol + H2O = tetradecanoate + glycerol + H(+). It carries out the reaction 2-hexadecanoylglycerol + H2O = glycerol + hexadecanoate + H(+). It catalyses the reaction 1-(9Z-octadecenoyl)-glycerol + H2O = glycerol + (9Z)-octadecenoate + H(+). The enzyme catalyses 2-(9Z,12Z-octadecadienoyl)-glycerol + H2O = (9Z,12Z)-octadecadienoate + glycerol + H(+). The catalysed reaction is 1-(5Z,8Z,11Z,14Z-eicosatetraenoyl)-glycerol + H2O = glycerol + (5Z,8Z,11Z,14Z)-eicosatetraenoate + H(+). It carries out the reaction 1-(9Z,12Z-octadecadienoyl)-glycerol + H2O = (9Z,12Z)-octadecadienoate + glycerol + H(+). It catalyses the reaction 1-hexadecanoylglycerol + H2O = glycerol + hexadecanoate + H(+). The enzyme catalyses 1-octadecanoylglycerol + H2O = octadecanoate + glycerol + H(+). The catalysed reaction is 1-octadecanoyl-2-(9,10-epoxyoctadecanoyl)-sn-glycero-3-phospho-L-serine + H2O = 9,10-epoxyoctadecanoate + 1-octadecanoyl-sn-glycero-3-phosphoserine + H(+). It carries out the reaction 1-octadecanoyl-2-(10-hydroxyoctadecanoyl)-sn-glycero-3-phospho-L-serine + H2O = 1-octadecanoyl-sn-glycero-3-phosphoserine + 10-hydroxyoctadecanoate + H(+). It catalyses the reaction 1-hexadecanoyl-2-(10-hydroxyoctadecanoyl)-sn-glycero-3-phospho-L-serine + H2O = 10-hydroxyoctadecanoate + 1-hexadecanoyl-sn-glycero-3-phospho-L-serine + H(+). Lysophosphatidylserine (LPS) lipase that mediates the hydrolysis of lysophosphatidylserine, a class of signaling lipids that regulates immunological and neurological processes. Represents a major lysophosphatidylserine lipase in the brain, thereby playing a key role in the central nervous system. Also able to hydrolyze oxidized phosphatidylserine; oxidized phosphatidylserine is produced in response to severe inflammatory stress and constitutes a proapoptotic 'eat me' signal. Also has monoacylglycerol (MAG) lipase activity: hydrolyzes 2-arachidonoylglycerol (2-AG), thereby acting as a regulator of endocannabinoid signaling pathways. Has a strong preference for very-long-chain lipid substrates; substrate specificity is likely due to improved catalysis and not improved substrate binding. In Gallus gallus (Chicken), this protein is Lysophosphatidylserine lipase ABHD12.